The chain runs to 433 residues: Chitinase-like protein EN03 (433 aa).

Residues 1 to 16 (MKLFIALVGLLALAKA) form the signal peptide. The region spanning 23–433 (SKVLCYYDSR…PILRAAKYRL (411 aa)) is the GH18 domain. A disulfide bridge links Cys-27 with Cys-54. N-linked (GlcNAc...) asparagine glycosylation is present at Asn-220. An intrachain disulfide couples Cys-337 to Cys-418.

The protein belongs to the glycosyl hydrolase 18 family. IDGF subfamily.

The protein resides in the secreted. This Bombyx mori (Silk moth) protein is Chitinase-like protein EN03.